The primary structure comprises 366 residues: Sigma54-dependent transcriptional activator SfnR (366 aa).

Residues 21–250 (QVFEDPRSQA…LENVIHHSLL (230 aa)) form the Sigma-54 factor interaction domain. ATP contacts are provided by residues 49-56 (GETGTGKE) and 112-121 (ANGGTLFLDE).

Its function is as follows. Involved in the dimethyl sulfide degradation pathway. Activates the expression of sfnG and sfnF. In Pseudomonas putida (Arthrobacter siderocapsulatus), this protein is Sigma54-dependent transcriptional activator SfnR.